The chain runs to 451 residues: Golgi reassembly-stacking protein 2 (451 aa).

A lipid anchor (N-myristoyl glycine) is attached at G2. PDZ GRASP-type domains follow at residues 15 to 105 (EGYH…FCSF) and 111 to 199 (NVWH…YGYL). Positions 15-215 (EGYHVLRVQE…PFEEGKKISL (201 aa)) are GRASP. Residues R30 and R47 each carry the dimethylated arginine modification. The segment at 194–199 (IGYGYL) is important for membrane binding. S214 bears the Phosphoserine mark. T222 carries the post-translational modification Phosphothreonine. T225 carries the phosphothreonine; by MAPK modification. Low complexity predominate over residues 236-252 (LSSVSPPSLSPPGTTGV). 2 disordered regions span residues 236-255 (LSSV…VEQS) and 377-451 (EGSS…SEPS). Residues 410–424 (SSLTVDVTSPASKVP) are compositionally biased toward polar residues. The residue at position 411 (S411) is a Phosphoserine. 2 positions are modified to phosphothreonine: T417 and T435. Residues S443 and S448 each carry the phosphoserine modification.

The protein belongs to the GORASP family. In terms of assembly, homodimer. Homooligomer. ER stress induces phosphorylation-dependent monomerization. Interacts with BLZF1/Golgin 45. Identified in a complex with RAB2 and GORASP2. Interacts with JAM2 and JAM3. Interacts with members of the p24 cargo receptors. Interacts with CNIH and the cytoplasmic domain of transmembrane TGFA, prior its transit in the trans-Golgi. Interacts with KCTD5. Interacts with TMED2 and TMED3. Interacts with SEC16A in response to ER stress. Interacts (via PDZ GRASP-type 1 domain) with core-glycosylated CFTR in response to ER stress. Myristoylated. Myristoylation is essential for the Golgi targeting. In terms of processing, palmitoylated. Post-translationally, phosphorylated in mitotic cells. ER stress-induced phosphorylation at Ser-443 induces monomerization and subsequent relocalization from Golgi to ER which is essential for mediating unconventional (ER/Golgi-independent) trafficking of CFTR to the cell membrane. As to expression, detected in lung, heart and testis. Colocalized in a polarized fashion in the acrosome region with JAM3 in round spermatids (at protein level).

The protein resides in the golgi apparatus membrane. The protein localises to the endoplasmic reticulum membrane. It is found in the golgi apparatus. Key structural protein of the Golgi apparatus. The membrane cisternae of the Golgi apparatus adhere to each other to form stacks, which are aligned side by side to form the Golgi ribbon. Acting in concert with GORASP1/GRASP65, is required for the formation and maintenance of the Golgi ribbon, and may be dispensable for the formation of stacks. However, other studies suggest that GORASP2 plays a role in assembly and membrane stacking of the Golgi cisternae, and in the process by which Golgi stacks reform after breakdown during mitosis and meiosis. May regulate the intracellular transport and presentation of a defined set of transmembrane proteins, such as transmembrane TGFA. Required for normal acrosome formation during spermiogenesis and normal male fertility, probably by promoting colocalization of JAM2 and JAM3 at contact sites between germ cells and Sertoli cells. Mediates ER stress-induced unconventional (ER/Golgi-independent) trafficking of core-glycosylated CFTR to cell membrane. This is Golgi reassembly-stacking protein 2 (Gorasp2) from Mus musculus (Mouse).